A 1892-amino-acid polypeptide reads, in one-letter code: Protein TIC 214 (1892 aa).

The next 6 helical transmembrane spans lie at 12 to 32 (LISL…YYGF), 68 to 88 (FIAG…HLAL), 89 to 109 (GKPH…FFWN), 128 to 148 (LSIQ…HFIL), 176 to 196 (VGWL…LVWI), and 225 to 245 (IFSI…PSPI). Acidic residues predominate over residues 256 to 266 (PEEVGESEEER). Positions 256-299 (PEEVGESEEERNIEIETISEGGGANQKQGTEENTSSSLFSEEEV) are disordered. Positions 280-294 (NQKQGTEENTSSSLF) are enriched in polar residues. The helical transmembrane segment at 1115-1135 (FYFFINFFIEKIYMDILLYII) threads the bilayer. Residues 1613-1636 (SNQEKDVEEDYDKSDKKKRRKKKQ) are disordered.

The protein belongs to the TIC214 family. As to quaternary structure, part of the Tic complex.

Its subcellular location is the plastid. It localises to the chloroplast inner membrane. In terms of biological role, involved in protein precursor import into chloroplasts. May be part of an intermediate translocation complex acting as a protein-conducting channel at the inner envelope. The sequence is that of Protein TIC 214 from Gossypium hirsutum (Upland cotton).